Consider the following 437-residue polypeptide: Xylose isomerase (437 aa).

Active-site residues include His101 and Asp104. 7 residues coordinate Mg(2+): Glu232, Glu268, His271, Asp296, Asp307, Asp309, and Asp339.

This sequence belongs to the xylose isomerase family. As to quaternary structure, homotetramer. It depends on Mg(2+) as a cofactor.

It localises to the cytoplasm. The catalysed reaction is alpha-D-xylose = alpha-D-xylulofuranose. This is Xylose isomerase from Mannheimia succiniciproducens (strain KCTC 0769BP / MBEL55E).